Consider the following 512-residue polypeptide: ATP synthase subunit alpha (512 aa).

Residue 169 to 176 (GDRQTGKT) participates in ATP binding.

Belongs to the ATPase alpha/beta chains family. In terms of assembly, F-type ATPases have 2 components, CF(1) - the catalytic core - and CF(0) - the membrane proton channel. CF(1) has five subunits: alpha(3), beta(3), gamma(1), delta(1), epsilon(1). CF(0) has three main subunits: a(1), b(2) and c(9-12). The alpha and beta chains form an alternating ring which encloses part of the gamma chain. CF(1) is attached to CF(0) by a central stalk formed by the gamma and epsilon chains, while a peripheral stalk is formed by the delta and b chains.

The protein localises to the cell inner membrane. The catalysed reaction is ATP + H2O + 4 H(+)(in) = ADP + phosphate + 5 H(+)(out). Functionally, produces ATP from ADP in the presence of a proton gradient across the membrane. The alpha chain is a regulatory subunit. The chain is ATP synthase subunit alpha from Orientia tsutsugamushi (strain Ikeda) (Rickettsia tsutsugamushi).